A 335-amino-acid polypeptide reads, in one-letter code: Teichoic acids export ATP-binding protein TagH (335 aa).

The region spanning 26–246 (IKGLFMPKSQ…YDEFVKWFNK (221 aa)) is the ABC transporter domain. ATP is bound at residue 60-67 (GINGSGKS).

Belongs to the ABC transporter superfamily. Teichoic acids exporter (TC 3.A.1.104.1) family. As to quaternary structure, the complex is composed of two ATP-binding proteins (TagH) and two transmembrane proteins (TagG).

It localises to the cell membrane. The catalysed reaction is ATP + H2O + teichoic acidSide 1 = ADP + phosphate + teichoic acidSide 2.. Part of the ABC transporter complex TagGH involved in teichoic acids export. Responsible for energy coupling to the transport system. This Listeria innocua serovar 6a (strain ATCC BAA-680 / CLIP 11262) protein is Teichoic acids export ATP-binding protein TagH.